Reading from the N-terminus, the 184-residue chain is ATP synthase subunit b, chloroplastic (184 aa).

The helical transmembrane segment at 27–49 (LATNLINLSVVLGVLIFFGKGVL) threads the bilayer.

Belongs to the ATPase B chain family. In terms of assembly, F-type ATPases have 2 components, F(1) - the catalytic core - and F(0) - the membrane proton channel. F(1) has five subunits: alpha(3), beta(3), gamma(1), delta(1), epsilon(1). F(0) has four main subunits: a(1), b(1), b'(1) and c(10-14). The alpha and beta chains form an alternating ring which encloses part of the gamma chain. F(1) is attached to F(0) by a central stalk formed by the gamma and epsilon chains, while a peripheral stalk is formed by the delta, b and b' chains.

Its subcellular location is the plastid. The protein resides in the chloroplast thylakoid membrane. Functionally, f(1)F(0) ATP synthase produces ATP from ADP in the presence of a proton or sodium gradient. F-type ATPases consist of two structural domains, F(1) containing the extramembraneous catalytic core and F(0) containing the membrane proton channel, linked together by a central stalk and a peripheral stalk. During catalysis, ATP synthesis in the catalytic domain of F(1) is coupled via a rotary mechanism of the central stalk subunits to proton translocation. Component of the F(0) channel, it forms part of the peripheral stalk, linking F(1) to F(0). The sequence is that of ATP synthase subunit b, chloroplastic from Nicotiana tabacum (Common tobacco).